Consider the following 310-residue polypeptide: Isoflavone reductase homolog A622 (310 aa).

NADP(+) contacts are provided by residues 13–19 (GGTGYIG), R38, and K47. Residue K135 is the Proton acceptor of the active site. An NADP(+)-binding site is contributed by R139.

The protein belongs to the NmrA-type oxidoreductase family. Isoflavone reductase subfamily. Monomer.

The protein resides in the cytoplasm. It participates in alkaloid biosynthesis; nicotine biosynthesis. NADPH-binding protein. Involved in the biosynthesis of pyridine alkaloid natural products, leading mainly to the production of anabasine, anatabine, nicotine and nornicotine, effective deterrents against herbivores with antiparasitic and pesticide properties (neurotoxins); nornicotine serves as the precursor in the synthesis of the carcinogen compound N'-nitrosonornicotine (NNN). Reductase involved in a late step of tobacco alkaloid biosynthesis. Triggers either the formation of a nicotinic acid-derived precursor or the final condensation reaction of tobacco alkaloids. This chain is Isoflavone reductase homolog A622, found in Nicotiana glauca (Glaucous tobacco).